Reading from the N-terminus, the 458-residue chain is tRNA modification GTPase MnmE (458 aa).

Residues Arg26, Glu88, and Arg127 each coordinate (6S)-5-formyl-5,6,7,8-tetrahydrofolate. Residues 224 to 378 (GLSTAIIGRP…IEDRINQLFF (155 aa)) form the TrmE-type G domain. A K(+)-binding site is contributed by Asn234. Residues 234–239 (NVGKSS), 253–259 (TDIAGTT), and 278–281 (DTAG) contribute to the GTP site. Position 238 (Ser238) interacts with Mg(2+). K(+) contacts are provided by Thr253, Ile255, and Thr258. Position 259 (Thr259) interacts with Mg(2+). Residue Lys458 coordinates (6S)-5-formyl-5,6,7,8-tetrahydrofolate.

The protein belongs to the TRAFAC class TrmE-Era-EngA-EngB-Septin-like GTPase superfamily. TrmE GTPase family. Homodimer. Heterotetramer of two MnmE and two MnmG subunits. It depends on K(+) as a cofactor.

Its subcellular location is the cytoplasm. In terms of biological role, exhibits a very high intrinsic GTPase hydrolysis rate. Involved in the addition of a carboxymethylaminomethyl (cmnm) group at the wobble position (U34) of certain tRNAs, forming tRNA-cmnm(5)s(2)U34. The polypeptide is tRNA modification GTPase MnmE (Streptococcus pyogenes serotype M6 (strain ATCC BAA-946 / MGAS10394)).